Reading from the N-terminus, the 364-residue chain is RNA-binding protein ZC3H11 (364 aa).

The C3H1-type zinc-finger motif lies at 64 to 92 (RYKTKLCKNFVQYGTCPYDIRCMFAHGEE). Residues 194–199 (VRHNPY) carry the MKT1-binding motif motif. The tract at residues 340–364 (EQSQSHLKREGNEGRGEGLHMFLSL) is disordered. Residues 346–357 (LKREGNEGRGEG) are compositionally biased toward basic and acidic residues.

As to quaternary structure, interacts (via MKT1-binding motif) with MKT1. Interacts with PBP1 (via C-terminus); the interaction is direct. In terms of processing, phosphorylated at the N-terminus. CK1.2-dependent phosphorylation may lead to proteasome-dependent degradation of ZC3H11 in absence of stress.

It localises to the cytoplasm. In terms of biological role, RNA-binding protein involved in regulation of mRNA stability. Binds AU-rich regions in the 3'-UTR of mRNAs and promotes their stabilization by recruiting a MKT1-containing complex. Stabilizes chaperone mRNAs during stress that causes an accumulation of misfolded or unfolded proteins in the cytoplasm. In Trypanosoma brucei brucei (strain 927/4 GUTat10.1), this protein is RNA-binding protein ZC3H11.